The primary structure comprises 442 residues: tRNA-2-methylthio-N(6)-dimethylallyladenosine synthase (442 aa).

The MTTase N-terminal domain occupies 6–122 (RKFYIHTFGC…LPALIAEAGD (117 aa)). Cys15, Cys51, Cys85, Cys157, Cys161, and Cys164 together coordinate [4Fe-4S] cluster. A Radical SAM core domain is found at 143–373 (RTQSLNAFVP…IDLQNGISAE (231 aa)). Residues 376–439 (GLAPGSVVEV…SATLFGQSAE (64 aa)) form the TRAM domain.

It belongs to the methylthiotransferase family. MiaB subfamily. As to quaternary structure, monomer. Requires [4Fe-4S] cluster as cofactor.

It is found in the cytoplasm. It catalyses the reaction N(6)-dimethylallyladenosine(37) in tRNA + (sulfur carrier)-SH + AH2 + 2 S-adenosyl-L-methionine = 2-methylsulfanyl-N(6)-dimethylallyladenosine(37) in tRNA + (sulfur carrier)-H + 5'-deoxyadenosine + L-methionine + A + S-adenosyl-L-homocysteine + 2 H(+). Its function is as follows. Catalyzes the methylthiolation of N6-(dimethylallyl)adenosine (i(6)A), leading to the formation of 2-methylthio-N6-(dimethylallyl)adenosine (ms(2)i(6)A) at position 37 in tRNAs that read codons beginning with uridine. The sequence is that of tRNA-2-methylthio-N(6)-dimethylallyladenosine synthase from Chlorobium phaeobacteroides (strain DSM 266 / SMG 266 / 2430).